The following is a 190-amino-acid chain: Major sperm protein 32 (190 aa).

The 118-residue stretch at 72–189 (MIQTQPGTKI…RRKNLPIEYN (118 aa)) folds into the MSP domain.

As to expression, sperm.

Its subcellular location is the cell projection. The protein localises to the pseudopodium. The protein resides in the cytoplasm. It is found in the cytoskeleton. Its function is as follows. Central component in molecular interactions underlying sperm crawling. Forms an extensive filament system that extends from sperm villipoda, along the leading edge of the pseudopod. This chain is Major sperm protein 32 (msp-32), found in Caenorhabditis elegans.